A 333-amino-acid polypeptide reads, in one-letter code: tRNA(Ile)-lysidine synthase (333 aa).

An ATP-binding site is contributed by 33-38; sequence SGGADS.

The protein belongs to the tRNA(Ile)-lysidine synthase family.

Its subcellular location is the cytoplasm. The enzyme catalyses cytidine(34) in tRNA(Ile2) + L-lysine + ATP = lysidine(34) in tRNA(Ile2) + AMP + diphosphate + H(+). Functionally, ligates lysine onto the cytidine present at position 34 of the AUA codon-specific tRNA(Ile) that contains the anticodon CAU, in an ATP-dependent manner. Cytidine is converted to lysidine, thus changing the amino acid specificity of the tRNA from methionine to isoleucine. The sequence is that of tRNA(Ile)-lysidine synthase from Salinispora arenicola (strain CNS-205).